Here is a 65-residue protein sequence, read N- to C-terminus: SPbeta prophage-derived uncharacterized protein YopU (65 aa).

The protein is SPbeta prophage-derived uncharacterized protein YopU (yopU) of Bacillus subtilis (strain 168).